Reading from the N-terminus, the 275-residue chain is Diaminopimelate epimerase (275 aa).

Asn-20 and Asn-63 together coordinate substrate. The Proton donor role is filled by Cys-72. Residues 73–74, Asn-179, and 197–198 contribute to the substrate site; these read GN and ER. Catalysis depends on Cys-207, which acts as the Proton acceptor. 208-209 serves as a coordination point for substrate; it reads GT.

Belongs to the diaminopimelate epimerase family. In terms of assembly, homodimer.

It is found in the cytoplasm. The catalysed reaction is (2S,6S)-2,6-diaminopimelate = meso-2,6-diaminopimelate. It participates in amino-acid biosynthesis; L-lysine biosynthesis via DAP pathway; DL-2,6-diaminopimelate from LL-2,6-diaminopimelate: step 1/1. Functionally, catalyzes the stereoinversion of LL-2,6-diaminopimelate (L,L-DAP) to meso-diaminopimelate (meso-DAP), a precursor of L-lysine and an essential component of the bacterial peptidoglycan. The sequence is that of Diaminopimelate epimerase from Chlamydia trachomatis serovar A (strain ATCC VR-571B / DSM 19440 / HAR-13).